The following is a 260-amino-acid chain: 3-methyl-2-oxobutanoate hydroxymethyltransferase (260 aa).

D42 and D81 together coordinate Mg(2+). 3-methyl-2-oxobutanoate contacts are provided by residues 42–43 (DS), D81, and K109. E111 contacts Mg(2+). The Proton acceptor role is filled by E178.

The protein belongs to the PanB family. As to quaternary structure, homodecamer; pentamer of dimers. Mg(2+) is required as a cofactor.

The protein localises to the cytoplasm. It catalyses the reaction 3-methyl-2-oxobutanoate + (6R)-5,10-methylene-5,6,7,8-tetrahydrofolate + H2O = 2-dehydropantoate + (6S)-5,6,7,8-tetrahydrofolate. It participates in cofactor biosynthesis; (R)-pantothenate biosynthesis; (R)-pantoate from 3-methyl-2-oxobutanoate: step 1/2. In terms of biological role, catalyzes the reversible reaction in which hydroxymethyl group from 5,10-methylenetetrahydrofolate is transferred onto alpha-ketoisovalerate to form ketopantoate. The protein is 3-methyl-2-oxobutanoate hydroxymethyltransferase of Vesicomyosocius okutanii subsp. Calyptogena okutanii (strain HA).